Here is a 1915-residue protein sequence, read N- to C-terminus: Methylcytosine dioxygenase tet3-B (1915 aa).

Residues 28 to 49 are disordered; that stretch reads RLRVSEMPSELNGGGDGSKGDG. A CXXC-type zinc finger spans residues 61–102; the sequence is SNKKRKRCGVCVPCLRKEPCGTCYNCVNRSTSHQICKMRKCE. Cys68, Cys71, Cys74, Cys80, Cys83, Cys86, Cys96, and Cys101 together coordinate Zn(2+). Positions 629 to 638 are enriched in polar residues; the sequence is PNSQQAPVSK. 3 disordered regions span residues 629-679, 776-806, and 831-880; these read PNSQ…RVKE, GRCP…VPGQ, and FSLP…LSNN. A compositionally biased stretch (basic residues) spans 664-676; that stretch reads KPPRKQVQIKKPR. The span at 779–793 shows a compositional bias: low complexity; it reads PTPSTGDSSSGQGDS. Composition is skewed to polar residues over residues 838–854 and 864–880; these read VPSQ…TSGV and QLPS…LSNN. Residues Cys974, Cys976, Cys1034, His1060, and Cys1062 each contribute to the Zn(2+) site. 2-oxoglutarate is bound at residue Arg1102. Cys1112, Cys1114, Cys1130, Cys1139, and Cys1199 together coordinate Zn(2+). Cys1215 is a 2-oxoglutarate binding site. His1221 contacts Zn(2+). The Fe cation site is built by His1223 and Asp1225. His1257 contacts 2-oxoglutarate. 3 disordered regions span residues 1298-1356, 1469-1516, and 1719-1753; these read LSEP…QTKP, GMNQ…APME, and PAVN…VKEE. Residues 1308–1339 show a composition bias toward basic and acidic residues; sequence RQLDAKKATAEKKKLQKEKLVSPDKTKQEPSD. The segment covering 1340-1355 has biased composition (polar residues); it reads TKTCQQNPGVPQQQTK. Basic and acidic residues predominate over residues 1482 to 1491; the sequence is NYRRSSEVPH. Polar residues-rich tracts occupy residues 1494–1503 and 1720–1732; these read SLQNSNSQKS and AVNS…SQNH. His1794 serves as a coordination point for Fe cation. Residue 1809–1811 participates in 2-oxoglutarate binding; the sequence is RIS. Residues 1827–1860 are a coiled coil; the sequence is LALWEAKMKQLAERARVKEEEAAKLGIKQEVKSL.

This sequence belongs to the TET family. Fe(2+) serves as cofactor. Requires Zn(2+) as cofactor. In terms of tissue distribution, detected in embryo (at protein level). Detected in embryonic head, in developing brain and eye.

It is found in the nucleus. The protein localises to the chromosome. The catalysed reaction is a 5-methyl-2'-deoxycytidine in DNA + 2-oxoglutarate + O2 = a 5-hydroxymethyl-2'-deoxycytidine in DNA + succinate + CO2. The enzyme catalyses a 5-hydroxymethyl-2'-deoxycytidine in DNA + 2-oxoglutarate + O2 = a 5-formyl-2'-deoxycytidine in DNA + succinate + CO2 + H2O. It catalyses the reaction a 5-formyl-2'-deoxycytidine in DNA + 2-oxoglutarate + O2 = a 5-carboxyl-2'-deoxycytidine in DNA + succinate + CO2 + H(+). In terms of biological role, dioxygenase that catalyzes the conversion of the modified genomic base 5-methylcytosine (5mC) into 5-hydroxymethylcytosine (5hmC) and plays a key role in epigenetic chromatin reprogramming during embryonic development. Conversion of 5mC into 5hmC probably constitutes the first step in cytosine demethylation. Selectively binds to the promoter region of target genes and contributes to regulate the expression of numerous developmental genes, including pax6, rax, sox9 and six3. May also contribute to the regulation of target genes in ways that do not require its enzyme activity. The protein is Methylcytosine dioxygenase tet3-B of Xenopus laevis (African clawed frog).